Reading from the N-terminus, the 258-residue chain is Transcription factor ORG3 (258 aa).

Residues 76 to 128 enclose the bHLH domain; sequence VKKLNHNASERDRRRKINSLFSSLRSCLPASGQSKKLSIPATVSRSLKYIPEL.

In terms of assembly, homodimer. As to expression, expressed in vascular tissues. Detected in roots.

The protein resides in the nucleus. This Arabidopsis thaliana (Mouse-ear cress) protein is Transcription factor ORG3 (ORG3).